Here is a 235-residue protein sequence, read N- to C-terminus: Sugar fermentation stimulation protein homolog (235 aa).

It belongs to the SfsA family.

This Alkaliphilus oremlandii (strain OhILAs) (Clostridium oremlandii (strain OhILAs)) protein is Sugar fermentation stimulation protein homolog.